The chain runs to 190 residues: HTH-type transcriptional repressor AcnR (190 aa).

Residues 10–70 enclose the HTH tetR-type domain; that stretch reads SMRRQEILEG…ALAREDAARM (61 aa). The segment at residues 33–52 is a DNA-binding region (H-T-H motif); that stretch reads TVRRLEETVGKSRGAIFHHF. Citrate-binding positions include 79 to 80, R130, and N134; that span reads LV. Position 181 (E181) interacts with Mg(2+). Citrate is bound at residue R185.

Homodimer.

Functionally, acnR negatively controls the expression of the aconitase gene acn. The polypeptide is HTH-type transcriptional repressor AcnR (Corynebacterium diphtheriae (strain ATCC 700971 / NCTC 13129 / Biotype gravis)).